We begin with the raw amino-acid sequence, 1079 residues long: Ubiquitin carboxyl-terminal hydrolase 26 (1079 aa).

Basic residues predominate over residues 1 to 12 (MSRPNTRNKSKR). Residues 1 to 21 (MSRPNTRNKSKRPRADDCESP) form a disordered region. The USP domain occupies 106–446 (AGLTNLGATC…DAYMLMYKRI (341 aa)). Catalysis depends on C115, which acts as the Nucleophile. H359 (proton acceptor) is an active-site residue. Residues 384 to 419 (GLHPFGEKPGKSSDKTDQKPQGSSTADSVTNDDNNS) form a disordered region. Over residues 388–401 (FGEKPGKSSDKTDQ) the composition is skewed to basic and acidic residues. Positions 402 to 417 (KPQGSSTADSVTNDDN) are enriched in polar residues. DUSP domains lie at 495-598 (AYIT…DDFC), 613-715 (DVYR…FPSD), and 738-862 (AVKL…AEIV). The disordered stretch occupies residues 948–972 (EASAAVPVPDRRTSKRSRRTTSGNS). A Ubiquitin-like domain is found at 961–1037 (SKRSRRTTSG…LWVKDSEIYE (77 aa)).

Belongs to the peptidase C19 family.

It is found in the nucleus. The enzyme catalyses Thiol-dependent hydrolysis of ester, thioester, amide, peptide and isopeptide bonds formed by the C-terminal Gly of ubiquitin (a 76-residue protein attached to proteins as an intracellular targeting signal).. In terms of biological role, recognizes and hydrolyzes the peptide bond at the C-terminal Gly of ubiquitin. Involved in the processing of poly-ubiquitin precursors as well as that of ubiquitinated proteins. Deubiquitinates H2BK143ub1 of histone H2B. This chain is Ubiquitin carboxyl-terminal hydrolase 26 (UBP26), found in Oryza sativa subsp. japonica (Rice).